A 255-amino-acid polypeptide reads, in one-letter code: Mediator of RNA polymerase II transcription subunit 18 (255 aa).

Belongs to the Mediator complex subunit 18 family. As to quaternary structure, component of the Mediator complex.

The protein resides in the nucleus. Functionally, component of the Mediator complex, a coactivator involved in the regulated transcription of nearly all RNA polymerase II-dependent genes. Mediator functions as a bridge to convey information from gene-specific regulatory proteins to the basal RNA polymerase II transcription machinery. Mediator is recruited to promoters by direct interactions with regulatory proteins and serves as a scaffold for the assembly of a functional preinitiation complex with RNA polymerase II and the general transcription factors. The protein is Mediator of RNA polymerase II transcription subunit 18 (SRB5) of Kluyveromyces lactis (strain ATCC 8585 / CBS 2359 / DSM 70799 / NBRC 1267 / NRRL Y-1140 / WM37) (Yeast).